The primary structure comprises 338 residues: MARSLSQSLTATTQKLKGKKNGGKGKNKPSAKIKKTQKEMLYGILNERNIRQIQFGLNKKFSTWYGSAVYFDPETKRLGCSETKGQLSSVSNSQYWLDTLFVCEYCFKYTDDQTRFVGHVASCPFQYRVPGKIKYKSPEYTIRRVKGSKYQLFCQCLCLFTKLYLDNKSMYFKVDHYEFYIVYETGSTKPMGFFSKDLVSYQQNNLACILIFPPYQRRGLGLLLIEFSYKLSQLEGVISGPEVPLSPFGLIGYLKYWSQILCWHLIEGDLAHYDKVTLEDLSIVTGMRVNDVILTLKHLNCIGENNQIYLQSLNSWLKLHGTKRNWFKLKDEYLLIDD.

Polar residues predominate over residues 1–15 (MARSLSQSLTATTQK). Residues 1 to 31 (MARSLSQSLTATTQKLKGKKNGGKGKNKPSA) are disordered. Over residues 16–31 (LKGKKNGGKGKNKPSA) the composition is skewed to basic residues. Positions 45-338 (LNERNIRQIQ…LKDEYLLIDD (294 aa)) constitute an MYST-type HAT domain. The segment at 100 to 126 (LFVCEYCFKYTDDQTRFVGHVASCPFQ) adopts a C2HC MYST-type zinc-finger fold. Lysine 168 is subject to N6-acetyllysine; by autocatalysis. Residues 209 to 211 (ILI) and 216 to 222 (QRRGLGL) each bind acetyl-CoA. Glutamate 242 acts as the Proton donor/acceptor in catalysis. 2 residues coordinate acetyl-CoA: serine 246 and lysine 323.

This sequence belongs to the MYST (SAS/MOZ) family. Interacts with CAC1. Component of the SAS complex, at least composed of SAS2, SAS4 and SAS5. These three proteins constitute the core of the complex and are sufficient to acetylate histones. SAS4 is essential for HAT activity of the complex, while SAS5 is required for maxiaml HAT activity. Post-translationally, autoacetylation at Lys-168 is required for proper function.

It is found in the cytoplasm. The protein localises to the nucleus. The catalysed reaction is L-lysyl-[protein] + acetyl-CoA = N(6)-acetyl-L-lysyl-[protein] + CoA + H(+). In terms of biological role, histone acetyltransferase (HAT) subunit of the SAS complex, a multiprotein complex that acetylates 'Lys-16' of histone H4 and 'Lys-14' of histone H3. The SAS complex is however unable to acetylate nucleosomal histones. The complex is involved in transcriptional silencing at telomeres and at HML locus. Also involved in rDNA silencing and G0 control. The chain is Histone acetyltransferase SAS2 (SAS2) from Saccharomyces cerevisiae (strain ATCC 204508 / S288c) (Baker's yeast).